Reading from the N-terminus, the 333-residue chain is Cytochrome f (333 aa).

The N-terminal stretch at 1–44 (MRNACTRARLTRTARAMVKTLFIAIASVTFFFTSDLALPQSAAA) is a signal peptide. 4 residues coordinate heme: tyrosine 45, cysteine 66, cysteine 69, and histidine 70. Residues 299–318 (VGWLIAFVALVMLAQVMLVL) traverse the membrane as a helical segment.

The protein belongs to the cytochrome f family. As to quaternary structure, the 4 large subunits of the cytochrome b6-f complex are cytochrome b6, subunit IV (17 kDa polypeptide, PetD), cytochrome f and the Rieske protein, while the 4 small subunits are PetG, PetL, PetM and PetN. The complex functions as a dimer. It depends on heme as a cofactor.

The protein localises to the cellular thylakoid membrane. Component of the cytochrome b6-f complex, which mediates electron transfer between photosystem II (PSII) and photosystem I (PSI), cyclic electron flow around PSI, and state transitions. This Nostoc sp. (strain PCC 7120 / SAG 25.82 / UTEX 2576) protein is Cytochrome f.